The sequence spans 388 residues: MNLHEYQAKQIFAQYGLPVSEGCACQSLEEAIQAVKKLGGGQWVAKCQVHAGGRGKAGGVKLVKSEEEVRSFFEKFLGQRLVTFQTDAKGQPVNAIYMEACANVKKELYLGAVLDRSSQRIVFMVSTEGGVNIEEVAEKTPHLLHKMPIDPLVGAMPYQGRELAFKLGLQGKQIQQFAQIFCQLGKMFVEKDLSLLEINPLVILDNDQLHCLDAKIVVDGNALYRQPELNAMRDPSQEDAREAAAEQWHLNYVALEGNIGCMVNGAGLAMGTMDIVKLHGGQPANFLDVGGGTTKERVAEAFKIILSDQSVKAILVNIFGGIVRCDLIAEGIVAAVNEVGVSVPVVVRLEGNNAPLGREILAQSGLNIIAATSLTDAAVQVVNAAEGK.

An ATP-grasp domain is found at 9–244; it reads KQIFAQYGLP…PSQEDAREAA (236 aa). ATP is bound by residues Lys-46, 53–55, Glu-99, Ala-102, and Glu-107; that span reads GRG. The Mg(2+) site is built by Asn-199 and Asp-213. Substrate contacts are provided by residues Asn-264 and 321-323; that span reads GIV.

Belongs to the succinate/malate CoA ligase beta subunit family. Heterotetramer of two alpha and two beta subunits. The cofactor is Mg(2+).

The enzyme catalyses succinate + ATP + CoA = succinyl-CoA + ADP + phosphate. The catalysed reaction is GTP + succinate + CoA = succinyl-CoA + GDP + phosphate. It functions in the pathway carbohydrate metabolism; tricarboxylic acid cycle; succinate from succinyl-CoA (ligase route): step 1/1. Succinyl-CoA synthetase functions in the citric acid cycle (TCA), coupling the hydrolysis of succinyl-CoA to the synthesis of either ATP or GTP and thus represents the only step of substrate-level phosphorylation in the TCA. The beta subunit provides nucleotide specificity of the enzyme and binds the substrate succinate, while the binding sites for coenzyme A and phosphate are found in the alpha subunit. The protein is Succinate--CoA ligase [ADP-forming] subunit beta of Mannheimia succiniciproducens (strain KCTC 0769BP / MBEL55E).